Consider the following 327-residue polypeptide: DNA-directed RNA polymerase subunit alpha (327 aa).

The interval 1-231 (MIYQMQMPAK…DHVLLFADFS (231 aa)) is alpha N-terminal domain (alpha-NTD). Residues 247 to 327 (DEFETMRRLL…GMDITRYQMK (81 aa)) are alpha C-terminal domain (alpha-CTD).

This sequence belongs to the RNA polymerase alpha chain family. Homodimer. The RNAP catalytic core consists of 2 alpha, 1 beta, 1 beta' and 1 omega subunit. When a sigma factor is associated with the core the holoenzyme is formed, which can initiate transcription.

It catalyses the reaction RNA(n) + a ribonucleoside 5'-triphosphate = RNA(n+1) + diphosphate. In terms of biological role, DNA-dependent RNA polymerase catalyzes the transcription of DNA into RNA using the four ribonucleoside triphosphates as substrates. This chain is DNA-directed RNA polymerase subunit alpha, found in Chlorobium chlorochromatii (strain CaD3).